The primary structure comprises 311 residues: Geranylgeranyl transferase type-2 subunit alpha (311 aa).

The stretch at 12–43 (EKAKAQRLKELEKIESYNKLVKSFEELREKQN) forms a coiled coil. 5 PFTA repeats span residues 49–82 (ISLSVSKLVLIENPEFYTIWNYRRLAILQFTETK), 93–126 (NEMKFLEECIQRFTKSYWIWFHRQWIALRMDNCD), 129–162 (REMKLCTKLLNFDLRNFHCWGHRRFILKHSNIKL), 164–197 (DELKYTTEKVEQNFSNYSAWHQRSSILPKIYKEP), and 206–239 (EEFELVRNAVYTEPKDSSSWIYHKWLVATIKSIP).

Belongs to the protein prenyltransferase subunit alpha family. In terms of assembly, heterodimer of an alpha and a beta subunit.

The enzyme catalyses geranylgeranyl diphosphate + L-cysteinyl-[protein] = S-geranylgeranyl-L-cysteinyl-[protein] + diphosphate. Catalyzes the transfer of a geranylgeranyl moiety from geranylgeranyl diphosphate to proteins with a C-terminal sequence motif -XCC or -XCXC, where both cysteines may become modified. The sequence is that of Geranylgeranyl transferase type-2 subunit alpha (rabggta) from Dictyostelium discoideum (Social amoeba).